The sequence spans 395 residues: ATP phosphoribosyltransferase regulatory subunit (395 aa).

It belongs to the class-II aminoacyl-tRNA synthetase family. HisZ subfamily. Heteromultimer composed of HisG and HisZ subunits.

The protein resides in the cytoplasm. It functions in the pathway amino-acid biosynthesis; L-histidine biosynthesis; L-histidine from 5-phospho-alpha-D-ribose 1-diphosphate: step 1/9. Required for the first step of histidine biosynthesis. May allow the feedback regulation of ATP phosphoribosyltransferase activity by histidine. The chain is ATP phosphoribosyltransferase regulatory subunit from Ectopseudomonas mendocina (strain ymp) (Pseudomonas mendocina).